Reading from the N-terminus, the 367-residue chain is Glycerol dehydrogenase (367 aa).

D37, G94, K95, T116, and S119 together coordinate NAD(+). A glycerol-binding site is contributed by D121. 3 residues coordinate NAD(+): S125, L127, and Y131. Residues D171, H254, and H271 each contribute to the Zn(2+) site. H254 is a binding site for glycerol.

This sequence belongs to the iron-containing alcohol dehydrogenase family. Requires Zn(2+) as cofactor.

The catalysed reaction is glycerol + NAD(+) = dihydroxyacetone + NADH + H(+). The protein operates within polyol metabolism; glycerol fermentation; glycerone phosphate from glycerol (oxidative route): step 1/2. Functionally, catalyzes the NAD-dependent oxidation of glycerol to dihydroxyacetone (glycerone). Allows microorganisms to utilize glycerol as a source of carbon under anaerobic conditions. This is Glycerol dehydrogenase (gldA) from Escherichia coli O6:H1 (strain CFT073 / ATCC 700928 / UPEC).